A 400-amino-acid chain; its full sequence is Elongation factor Tu (400 aa).

The tr-type G domain maps to 10-208 (KPHLNVGTIG…TMDEYFPEPQ (199 aa)). Positions 19–26 (GHIDHGKT) are G1. 19-26 (GHIDHGKT) is a binding site for GTP. Position 26 (Thr26) interacts with Mg(2+). Residues 60–64 (GITIN) are G2. Residues 81–84 (DCPG) form a G3 region. Residues 81–85 (DCPGH) and 136–139 (NKTD) contribute to the GTP site. The tract at residues 136 to 139 (NKTD) is G4. A G5 region spans residues 174-176 (SAL).

This sequence belongs to the TRAFAC class translation factor GTPase superfamily. Classic translation factor GTPase family. EF-Tu/EF-1A subfamily. As to quaternary structure, monomer.

The protein localises to the cytoplasm. It catalyses the reaction GTP + H2O = GDP + phosphate + H(+). Its function is as follows. GTP hydrolase that promotes the GTP-dependent binding of aminoacyl-tRNA to the A-site of ribosomes during protein biosynthesis. This Thermosipho melanesiensis (strain DSM 12029 / CIP 104789 / BI429) protein is Elongation factor Tu.